The chain runs to 255 residues: 3-deoxy-manno-octulosonate cytidylyltransferase (255 aa).

It belongs to the KdsB family.

The protein resides in the cytoplasm. It catalyses the reaction 3-deoxy-alpha-D-manno-oct-2-ulosonate + CTP = CMP-3-deoxy-beta-D-manno-octulosonate + diphosphate. It participates in nucleotide-sugar biosynthesis; CMP-3-deoxy-D-manno-octulosonate biosynthesis; CMP-3-deoxy-D-manno-octulosonate from 3-deoxy-D-manno-octulosonate and CTP: step 1/1. The protein operates within bacterial outer membrane biogenesis; lipopolysaccharide biosynthesis. In terms of biological role, activates KDO (a required 8-carbon sugar) for incorporation into bacterial lipopolysaccharide in Gram-negative bacteria. The sequence is that of 3-deoxy-manno-octulosonate cytidylyltransferase from Thermodesulfovibrio yellowstonii (strain ATCC 51303 / DSM 11347 / YP87).